We begin with the raw amino-acid sequence, 305 residues long: Ribonuclease Z (305 aa).

7 residues coordinate Zn(2+): H61, H63, D65, H66, H138, D208, and H266. D65 serves as the catalytic Proton acceptor.

The protein belongs to the RNase Z family. In terms of assembly, homodimer. The cofactor is Zn(2+).

The catalysed reaction is Endonucleolytic cleavage of RNA, removing extra 3' nucleotides from tRNA precursor, generating 3' termini of tRNAs. A 3'-hydroxy group is left at the tRNA terminus and a 5'-phosphoryl group is left at the trailer molecule.. Its function is as follows. Zinc phosphodiesterase, which displays some tRNA 3'-processing endonuclease activity. Probably involved in tRNA maturation, by removing a 3'-trailer from precursor tRNA. This chain is Ribonuclease Z, found in Methanosarcina acetivorans (strain ATCC 35395 / DSM 2834 / JCM 12185 / C2A).